A 102-amino-acid polypeptide reads, in one-letter code: Small ubiquitin-related modifier 1-A (102 aa).

The segment at 1-20 is disordered; it reads MSDQEAKPSSEDLGDKKDGG. The region spanning 21–98 is the Ubiquitin-like domain; sequence DYIKLKVIGQ…IEVYQEQTGG (78 aa). Glycine 98 is covalently cross-linked (Glycyl lysine isopeptide (Gly-Lys) (interchain with K-? in acceptor proteins)). Residues 99–102 constitute a propeptide that is removed on maturation; it reads HSTF.

Belongs to the ubiquitin family. SUMO subfamily. In terms of assembly, interacts with sae2, ube2i, ranbp2, pias1 and pias2. Covalently attached to a number of proteins including rangap1 and ranbp2. Interacts with sox9 and sox10. In terms of processing, cleavage of precursor form by a sentrin-specific protease is necessary for function.

The protein localises to the nucleus membrane. The protein resides in the nucleus speckle. Its subcellular location is the cytoplasm. It localises to the nucleus. It is found in the PML body. The protein localises to the cell membrane. Functionally, ubiquitin-like protein that can be covalently attached to proteins as a monomer or a lysine-linked polymer. Covalent attachment via an isopeptide bond to its substrates requires prior activation by the E1 complex sae1-sae2 and linkage to the E2 enzyme ube2i. This post-translational modification on lysine residues of proteins plays a crucial role in a number of cellular processes such as nuclear transport, DNA replication and repair, mitosis and signal transduction. Polymeric sumo1 chains are also susceptible to polyubiquitination which functions as a signal for proteasomal degradation of modified proteins. The polypeptide is Small ubiquitin-related modifier 1-A (sumo1-a) (Xenopus laevis (African clawed frog)).